The following is an 85-amino-acid chain: Conotoxin Lt28.5 (85 aa).

An N-terminal signal peptide occupies residues 1-21; that stretch reads MPKLEMMLLVLLILPLCYIDA. Residues 22–40 constitute a propeptide that is removed on maturation; sequence VGPPPPWNMEDEIIEHWQK.

The protein belongs to the conotoxin D superfamily. Post-translationally, contains 5 disulfide bonds. Expressed by the venom duct.

It localises to the secreted. Functionally, probable neurotoxin. The chain is Conotoxin Lt28.5 from Conus litteratus (Lettered cone).